Reading from the N-terminus, the 138-residue chain is DNA-directed RNA polymerase subunit omega (138 aa).

The disordered stretch occupies residues 101-138 (AEDDDTLEADGLTIHDGADSDLDLSDDAGQDTDEADED). A compositionally biased stretch (acidic residues) spans 119 to 138 (DSDLDLSDDAGQDTDEADED).

This sequence belongs to the RNA polymerase subunit omega family. In terms of assembly, the RNAP catalytic core consists of 2 alpha, 1 beta, 1 beta' and 1 omega subunit. When a sigma factor is associated with the core the holoenzyme is formed, which can initiate transcription.

The catalysed reaction is RNA(n) + a ribonucleoside 5'-triphosphate = RNA(n+1) + diphosphate. Its function is as follows. Promotes RNA polymerase assembly. Latches the N- and C-terminal regions of the beta' subunit thereby facilitating its interaction with the beta and alpha subunits. The chain is DNA-directed RNA polymerase subunit omega from Rhodospirillum rubrum (strain ATCC 11170 / ATH 1.1.1 / DSM 467 / LMG 4362 / NCIMB 8255 / S1).